Consider the following 205-residue polypeptide: Fe/S biogenesis protein NfuA (205 aa).

2 residues coordinate [4Fe-4S] cluster: Cys-162 and Cys-165.

The protein belongs to the NfuA family. As to quaternary structure, homodimer. [4Fe-4S] cluster serves as cofactor.

Its function is as follows. Involved in iron-sulfur cluster biogenesis. Binds a 4Fe-4S cluster, can transfer this cluster to apoproteins, and thereby intervenes in the maturation of Fe/S proteins. Could also act as a scaffold/chaperone for damaged Fe/S proteins. The sequence is that of Fe/S biogenesis protein NfuA from Blochmanniella floridana.